We begin with the raw amino-acid sequence, 456 residues long: RuvB-like 1 (456 aa).

A Glycyl lysine isopeptide (Lys-Gly) (interchain with G-Cter in SUMO2) cross-link involves residue Lys-2. Residue 70-77 (GPPGTGKT) coordinates ATP. Lys-225 participates in a covalent cross-link: Glycyl lysine isopeptide (Lys-Gly) (interchain with G-Cter in SUMO1); alternate. Residue Lys-225 forms a Glycyl lysine isopeptide (Lys-Gly) (interchain with G-Cter in SUMO2); alternate linkage. Lys-445 is covalently cross-linked (Glycyl lysine isopeptide (Lys-Gly) (interchain with G-Cter in SUMO2)). An N6-acetyllysine modification is found at Lys-453.

This sequence belongs to the RuvB family. As to quaternary structure, forms homohexameric rings. Can form a dodecamer with RUVBL2 made of two stacked hexameric rings; however, even though RUVBL1 and RUVBL2 are present in equimolar ratio, the oligomeric status of each hexamer is not known. Oligomerization may regulate binding to nucleic acids and conversely, binding to nucleic acids may affect the dodecameric assembly. Interaction of the complex with DHX34 results in conformational changes of the N-terminus of the RUVBL2 subunits, resulting in loss of nucleotide binding ability and ATP hydrolysis of the complex. Interacts with the transcriptional activation domain of MYC. Component of the RNA polymerase II holoenzyme complex. May also act to bridge the LEF1/TCF1-CTNNB1 complex and TBP. Component of the NuA4 histone acetyltransferase complex which contains the catalytic subunit KAT5/TIP60 and the subunits EP400, TRRAP/PAF400, BRD8/SMAP, EPC1, DMAP1/DNMAP1, RUVBL1/TIP49, RUVBL2, ING3, actin, ACTL6A/BAF53A, MORF4L1/MRG15, MORF4L2/MRGX, MRGBP, YEATS4/GAS41, VPS72/YL1 and MEAF6. The NuA4 complex interacts with MYC and the adenovirus E1A protein. RUVBL1 interacts with EP400. Component of a NuA4-related complex which contains EP400, TRRAP/PAF400, SRCAP, BRD8/SMAP, EPC1, DMAP1/DNMAP1, RUVBL1/TIP49, RUVBL2, actin, ACTL6A/BAF53A, VPS72 and YEATS4/GAS41. Component of the BAF53 complex, at least composed of ACTL6A/BAF53A, RUVBL1/TIP49, SMARCA2/BRM, and TRRAP/PAF400. Component of some MLL1/MLL complex, at least composed of the core components KMT2A/MLL1, ASH2L, HCFC1/HCF1, WDR5 and RBBP5, as well as the facultative components BACC1, CHD8, E2F6, HSP70, INO80C, KANSL1, LAS1L, MAX, MCRS1, MGA, MYST1/MOF, PELP1, PHF20, PRP31, RING2, RUVB1/TIP49A, RUVB2/TIP49B, SENP3, TAF1, TAF4, TAF6, TAF7, TAF9 and TEX10. Associates with alpha and gamma tubulins, particularly during metaphase and early anaphase. Interacts with NPAT. Component of the chromatin-remodeling INO80 complex; specifically part of a complex module associated with the helicase ATP-binding and the helicase C-terminal domain of INO80. Interacts with IGHMBP2. Interacts with OFD1. Interacts with HINT1. Component of a complex with USP49 and PSMC5. Component of a SWR1-like complex. Component of the R2TP complex composed at least of RUVBL1, RUVBL2, RPAP3 and PIHD1. Component of the PAQosome complex which is responsible for the biogenesis of several protein complexes and which consists of R2TP complex members RUVBL1, RUVBL2, RPAP3 and PIH1D1, URI complex members PFDN2, PFDN6, PDRG1, UXT and URI1 as well as ASDURF, POLR2E and DNAAF10/WDR92. Interacts with PIH1D1. Interacts with ITFG1. Interacts with WAC; WAC positively regulates MTOR activity by promoting the assembly of the TTT complex composed of TELO2, TTI1 and TTI2 and the RUVBL complex composed of RUVBL1 and RUVBL2 into the TTT-RUVBL complex which leads to the dimerization of the mTORC1 complex and its subsequent activation. The RUVBL1/RUVBL2 complex interacts with ZNHIT1 (via HIT-type zinc finger), ZNHIT3 (via HIT-type zinc finger), ZNHIT6 (via HIT-type zinc finger) and DDX59/ZNHIT5 (via HIT-type zinc finger) in the presence of ADP. Interacts with NOPCHAP1; the interaction is direct and disrupted upon ATP binding. Interacts with SMG1. Interacts with NOP2, NOP56 and NUFIP1.

The protein localises to the nucleus matrix. It localises to the nucleus. Its subcellular location is the nucleoplasm. It is found in the cytoplasm. The protein resides in the membrane. The protein localises to the cytoskeleton. It localises to the microtubule organizing center. Its subcellular location is the centrosome. It is found in the dynein axonemal particle. The enzyme catalyses ATP + H2O = ADP + phosphate + H(+). Functionally, possesses single-stranded DNA-stimulated ATPase and ATP-dependent DNA helicase (3' to 5') activity; hexamerization is thought to be critical for ATP hydrolysis and adjacent subunits in the ring-like structure contribute to the ATPase activity. Component of the NuA4 histone acetyltransferase complex which is involved in transcriptional activation of select genes principally by acetylation of nucleosomal histones H4 and H2A. This modification may both alter nucleosome-DNA interactions and promote interaction of the modified histones with other proteins which positively regulate transcription. This complex may be required for the activation of transcriptional programs associated with oncogene and proto-oncogene mediated growth induction, tumor suppressor mediated growth arrest and replicative senescence, apoptosis, and DNA repair. The NuA4 complex ATPase and helicase activities seem to be, at least in part, contributed by the association of RUVBL1 and RUVBL2 with EP400. NuA4 may also play a direct role in DNA repair when recruited to sites of DNA damage. Component of a SWR1-like complex that specifically mediates the removal of histone H2A.Z/H2AZ1 from the nucleosome. Proposed core component of the chromatin remodeling INO80 complex which exhibits DNA- and nucleosome-activated ATPase activity and catalyzes ATP-dependent nucleosome sliding. Plays an essential role in oncogenic transformation by MYC and also modulates transcriptional activation by the LEF1/TCF1-CTNNB1 complex. Essential for cell proliferation. May be able to bind plasminogen at cell surface and enhance plasminogen activation. The polypeptide is RuvB-like 1 (Ruvbl1) (Mus musculus (Mouse)).